Reading from the N-terminus, the 257-residue chain is Distal membrane-arm assembly complex protein 2 (257 aa).

At Ser253 the chain carries Phosphoserine.

Belongs to the ATP synthase subunit s family. As to quaternary structure, interacts with incompletely assembled mitochondrial NADH:ubiquinone oxidoreductase complex (complex I).

It is found in the mitochondrion. Its function is as follows. Required for the assembly of the mitochondrial NADH:ubiquinone oxidoreductase complex (complex I). Involved in the assembly of the distal region of complex I. This chain is Distal membrane-arm assembly complex protein 2, found in Homo sapiens (Human).